A 998-amino-acid chain; its full sequence is MAQVVMSALPAEDEESSESRMVVTFLMSALESMCKELAKSKAEVACIAVYETDVFVVGTERGRAFVNTRKDFQKDFVKYCVEEEEKAAEMHKMKSTTQANRMSVDAVEIETLRKTVEDYFCFCYGKALGKSTVVPVPYEKMLRDQSAVVVQGLPEGVAFKHPEHYDLATLKWILENKAGISFIIKRPFLEPKKHLGGRVLAAEAERSMLSPSGSCGPIKVKTEPTEDSGISLEMAAVTVKEESEDPDYYQYNIQGPSETDGVDEKLPLSKALQGSHHSSEGNEGTEVEVPAEDSTQHVPSETSEDPEVEVTIEDDDYSPPTKRLKSTEPPPPPPVPEPANAGKRKVREFNFEKWNARITDLRKQVEELFERKYAQAIKAKGPVTIPYPLFQSHVEDLYVEGLPEGIPFRRPSTYGIPRLERILLAKERIRFVIKKHELLNSTREDLQLDKPASGVKEEWYARITKLRKMVDQLFCKKFAEALGSTEAKAVPYQKFEAHPNDLYVEGLPENIPFRSPSWYGIPRLEKIIQVGNRIKFVIKRPELLTHSTTEVTQPRTNTPVKEDWNVRITKLRKQVEEIFNLKFAQALGLTEAVKVPYPVFESNPEFLYVEGLPEGIPFRSPTWFGIPRLERIVRGSNKIKFVVKKPELVVSYLPPGMASKINTKALQSPKRPRSPGSNSKVPEIEVTVEGPNNSSPQTSAVRTPTQTNGSNVPFKPRGREFSFEAWNAKITDLKQKVENLFNEKCGEALGLKQAVKVPFALFESFPEDFYVEGLPEGVPFRRPSTFGIPRLEKILRNKAKIKFIIKKPEMFETAIKESTSSKSPPRKINSSPNVNTTASGVEDLNIIQVTIPDDDNERLSKVEKARQLREQVNDLFSRKFGEAIGMGFPVKVPYRKITINPGCVVVDGMPPGVSFKAPSYLEISSMRRILDSAEFIKFTVIRPFPGLVINNQLVDQNESEGPVIQESAEASQLEVPVTEEIKETDGSSQIKQEPDPTW.

Ala-2 carries the post-translational modification N-acetylalanine. Ser-19 carries the phosphoserine modification. Glycyl lysine isopeptide (Lys-Gly) (interchain with G-Cter in SUMO2) cross-links involve residues Lys-35, Lys-86, Lys-92, and Lys-94. Ser-103 is modified (phosphoserine). One copy of the GTF2I-like 1 repeat lies at 103–197 (SVDAVEIETL…FLEPKKHLGG (95 aa)). The residue at position 130 (Lys-130) is an N6-acetyllysine; alternate. A Glycyl lysine isopeptide (Lys-Gly) (interchain with G-Cter in SUMO2); alternate cross-link involves residue Lys-130. Glycyl lysine isopeptide (Lys-Gly) (interchain with G-Cter in SUMO2) cross-links involve residues Lys-140 and Lys-185. Residues Ser-207, Ser-210, and Ser-214 each carry the phosphoserine modification. Residue Lys-219 forms a Glycyl lysine isopeptide (Lys-Gly) (interchain with G-Cter in SUMO2) linkage. Lys-221 participates in a covalent cross-link: Glycyl lysine isopeptide (Lys-Gly) (interchain with G-Cter in SUMO2); alternate. Lys-221 participates in a covalent cross-link: Glycyl lysine isopeptide (Lys-Gly) (interchain with G-Cter in SUMO1); alternate. Positions 241-341 (EESEDPDYYQ…PPPVPEPANA (101 aa)) are disordered. Residue Tyr-248 is modified to Phosphotyrosine; by BTK. The span at 302-317 (TSEDPEVEVTIEDDDY) shows a compositional bias: acidic residues. The Nuclear localization signal motif lies at 319 to 326 (PPTKRLKS). Residue Lys-325 forms a Glycyl lysine isopeptide (Lys-Gly) (interchain with G-Cter in SUMO2) linkage. Positions 328 to 337 (EPPPPPPVPE) are enriched in pro residues. A Glycyl lysine isopeptide (Lys-Gly) (interchain with G-Cter in SUMO2) cross-link involves residue Lys-343. Residues 352–446 (EKWNARITDL…ELLNSTREDL (95 aa)) form a GTF2I-like 2 repeat. Lys-353 bears the N6-acetyllysine; alternate mark. A Glycyl lysine isopeptide (Lys-Gly) (interchain with G-Cter in SUMO2); alternate cross-link involves residue Lys-353. Lys-380 is covalently cross-linked (Glycyl lysine isopeptide (Lys-Gly) (interchain with G-Cter in SUMO2)). Residue Tyr-398 is modified to Phosphotyrosine; by BTK. Position 412 is a phosphoserine; by PKG/PRKG1 (Ser-412). Residue Lys-435 forms a Glycyl lysine isopeptide (Lys-Gly) (interchain with G-Cter in SUMO2) linkage. N6-acetyllysine; alternate is present on Lys-450. A Glycyl lysine isopeptide (Lys-Gly) (interchain with G-Cter in SUMO2); alternate cross-link involves residue Lys-450. Glycyl lysine isopeptide (Lys-Gly) (interchain with G-Cter in SUMO2) cross-links involve residues Lys-456, Lys-488, and Lys-494. Residues 457-551 (EEWYARITKL…ELLTHSTTEV (95 aa)) form a GTF2I-like 3 repeat. Tyr-503 is subject to Phosphotyrosine; by BTK. A Phosphoserine modification is found at Ser-517. Residue Lys-526 forms a Glycyl lysine isopeptide (Lys-Gly) (interchain with G-Cter in SUMO2) linkage. A phosphothreonine mark is found at Thr-556 and Thr-558. Residue Lys-561 forms a Glycyl lysine isopeptide (Lys-Gly) (interchain with G-Cter in SUMO2) linkage. One copy of the GTF2I-like 4 repeat lies at 562–656 (EDWNVRITKL…ELVVSYLPPG (95 aa)). Glycyl lysine isopeptide (Lys-Gly) (interchain with G-Cter in SUMO2) cross-links involve residues Lys-660 and Lys-664. A disordered region spans residues 661 to 714 (INTKALQSPKRPRSPGSNSKVPEIEVTVEGPNNSSPQTSAVRTPTQTNGSNVPF). Phosphoserine is present on Ser-668. Lys-670 participates in a covalent cross-link: Glycyl lysine isopeptide (Lys-Gly) (interchain with G-Cter in SUMO2). Ser-674 carries the phosphoserine modification. A Glycyl lysine isopeptide (Lys-Gly) (interchain with G-Cter in SUMO2) cross-link involves residue Lys-680. Over residues 690-711 (GPNNSSPQTSAVRTPTQTNGSN) the composition is skewed to polar residues. Position 715 is an N6-acetyllysine; alternate (Lys-715). Lys-715 participates in a covalent cross-link: Glycyl lysine isopeptide (Lys-Gly) (interchain with G-Cter in SUMO2); alternate. Ser-722 bears the Phosphoserine mark. The GTF2I-like 5 repeat unit spans residues 724–818 (EAWNAKITDL…EMFETAIKES (95 aa)). Ser-784 is modified (phosphoserine; by PKG/PRKG1). A Glycyl lysine isopeptide (Lys-Gly) (interchain with G-Cter in SUMO2) cross-link involves residue Lys-816. The tract at residues 816–836 (KESTSSKSPPRKINSSPNVNT) is disordered. Residue Ser-823 is modified to Phosphoserine. Residues Lys-827, Lys-861, Lys-864, Lys-879, and Lys-891 each participate in a glycyl lysine isopeptide (Lys-Gly) (interchain with G-Cter in SUMO2) cross-link. Residues 859–953 (LSKVEKARQL…FPGLVINNQL (95 aa)) form a GTF2I-like 6 repeat. The tract at residues 960–998 (EGPVIQESAEASQLEVPVTEEIKETDGSSQIKQEPDPTW) is disordered. A Glycyl lysine isopeptide (Lys-Gly) (interchain with G-Cter in SUMO2); alternate cross-link involves residue Lys-991. Residue Lys-991 forms a Glycyl lysine isopeptide (Lys-Gly) (interchain with G-Cter in SUMO1); alternate linkage.

This sequence belongs to the TFII-I family. Homodimer (Potential). Interacts with SRF and PHOX1. Binds a pyrimidine-rich initiator (Inr) and a recognition site (E-box) for upstream stimulatory factor 1 (USF1). Associates with the PH domain of Bruton's tyrosine kinase (BTK). May be a component of a BHC histone deacetylase complex that contains HDAC1, HDAC2, HMG20B/BRAF35, KDM1A, RCOR1/CoREST, PHF21A/BHC80, ZMYM2, ZNF217, ZMYM3, GSE1 and GTF2I. Interacts with BTK and ARID3A. Interacts with isoform beta of PRKG1. Transiently phosphorylated on tyrosine residues by BTK in response to B-cell receptor stimulation. Phosphorylation on Tyr-248 and Tyr-398, and perhaps, on Tyr-503 contributes to BTK-mediated transcriptional activation. Post-translationally, sumoylated. In terms of tissue distribution, ubiquitous.

It localises to the cytoplasm. It is found in the nucleus. Interacts with the basal transcription machinery by coordinating the formation of a multiprotein complex at the C-FOS promoter, and linking specific signal responsive activator complexes. Promotes the formation of stable high-order complexes of SRF and PHOX1 and interacts cooperatively with PHOX1 to promote serum-inducible transcription of a reporter gene deriven by the C-FOS serum response element (SRE). Acts as a coregulator for USF1 by binding independently two promoter elements, a pyrimidine-rich initiator (Inr) and an upstream E-box. Required for the formation of functional ARID3A DNA-binding complexes and for activation of immunoglobulin heavy-chain transcription upon B-lymphocyte activation. The protein is General transcription factor II-I (Gtf2i) of Mus musculus (Mouse).